A 201-amino-acid polypeptide reads, in one-letter code: Putative manganese efflux pump MntP (201 aa).

6 helical membrane-spanning segments follow: residues 3-23 (LVSI…VSIT), 39-59 (IGLF…SIGI), 65-85 (IAAL…GKMI), 116-136 (LTLL…SFAF), 141-161 (IINT…IGVM), and 176-196 (ILGG…HTNI).

It belongs to the MntP (TC 9.B.29) family.

It localises to the cell membrane. Its function is as follows. Probably functions as a manganese efflux pump. This Clostridium botulinum (strain Loch Maree / Type A3) protein is Putative manganese efflux pump MntP.